Consider the following 296-residue polypeptide: NAD kinase (296 aa).

Catalysis depends on aspartate 72, which acts as the Proton acceptor. NAD(+)-binding positions include 72 to 73 (DG), 146 to 147 (ND), arginine 157, lysine 174, aspartate 176, 187 to 192 (TAYALS), and glutamine 247.

Belongs to the NAD kinase family. A divalent metal cation serves as cofactor.

The protein resides in the cytoplasm. The enzyme catalyses NAD(+) + ATP = ADP + NADP(+) + H(+). In terms of biological role, involved in the regulation of the intracellular balance of NAD and NADP, and is a key enzyme in the biosynthesis of NADP. Catalyzes specifically the phosphorylation on 2'-hydroxyl of the adenosine moiety of NAD to yield NADP. The sequence is that of NAD kinase from Pseudomonas putida (strain GB-1).